Here is a 134-residue protein sequence, read N- to C-terminus: 15.4 kDa class V heat shock protein (134 aa).

A sHSP domain is found at 19–126 (SLNNYQENHV…LIDPSDVPES (108 aa)).

Belongs to the small heat shock protein (HSP20) family. As to quaternary structure, may form oligomeric structures.

The protein localises to the cytoplasm. The chain is 15.4 kDa class V heat shock protein (HSP15.4) from Arabidopsis thaliana (Mouse-ear cress).